The chain runs to 170 residues: UPF0690 protein C1orf52 homolog (170 aa).

Disordered regions lie at residues 1-56 and 124-170; these read MAAE…PDEL and SNVY…KRKV. Basic and acidic residues predominate over residues 46–56; that stretch reads DTKKLPGPDEL. Acidic residues predominate over residues 144–159; the sequence is EEEEAREDSPPSDDEQ.

The protein belongs to the UPF0690 family.

In Xenopus tropicalis (Western clawed frog), this protein is UPF0690 protein C1orf52 homolog.